A 442-amino-acid chain; its full sequence is tRNA modification GTPase MnmE (442 aa).

(6S)-5-formyl-5,6,7,8-tetrahydrofolate-binding residues include Arg22, Glu79, and Lys119. One can recognise a TrmE-type G domain in the interval 216–366; it reads GIKTCLVGAP…LLEKIKSIFA (151 aa). Position 226 (Asn226) interacts with K(+). GTP is bound by residues 226–231, 245–251, and 270–273; these read NSGKSS, SEIPGTT, and DTAG. Ser230 serves as a coordination point for Mg(2+). K(+) contacts are provided by Ser245, Ile247, and Thr250. Thr251 serves as a coordination point for Mg(2+). Lys442 is a (6S)-5-formyl-5,6,7,8-tetrahydrofolate binding site.

The protein belongs to the TRAFAC class TrmE-Era-EngA-EngB-Septin-like GTPase superfamily. TrmE GTPase family. Homodimer. Heterotetramer of two MnmE and two MnmG subunits. Requires K(+) as cofactor.

It is found in the cytoplasm. Its function is as follows. Exhibits a very high intrinsic GTPase hydrolysis rate. Involved in the addition of a carboxymethylaminomethyl (cmnm) group at the wobble position (U34) of certain tRNAs, forming tRNA-cmnm(5)s(2)U34. The protein is tRNA modification GTPase MnmE of Mesomycoplasma hyopneumoniae (strain 232) (Mycoplasma hyopneumoniae).